Here is a 163-residue protein sequence, read N- to C-terminus: Adenosine 5'-monophosphoramidase HINT2 (163 aa).

The transit peptide at 1–17 (MAAAVVLAAGLCVARRA) directs the protein to the mitochondrion. One can recognise an HIT domain in the interval 55–163 (IFSRILDRSL…GGRQLQWPPG (109 aa)). AMP is bound by residues S63 and D80. K119 is modified (N6-acetyllysine). N136 provides a ligand contact to AMP. K139 is modified (N6-acetyllysine). AMP contacts are provided by residues 142-145 (AQSV) and 149-151 (HIH). The short motif at 147–151 (HLHIH) is the Histidine triad motif element. H149 serves as the catalytic Tele-AMP-histidine intermediate.

The protein belongs to the HINT family.

Its subcellular location is the mitochondrion. The catalysed reaction is adenosine 5'-phosphoramidate + H2O = AMP + NH4(+). Its function is as follows. Exhibits adenosine 5'-monophosphoramidase activity, hydrolyzing purine nucleotide phosphoramidates with a single phosphate group such as adenosine 5'monophosphoramidate (AMP-NH2) to yield AMP and NH2. Hydrolyzes adenosine 5'-O-p-nitrophenylphosphoramidate (AMP-pNA). May be involved in steroid biosynthesis. May play a role in apoptosis. This is Adenosine 5'-monophosphoramidase HINT2 from Bos taurus (Bovine).